The chain runs to 523 residues: Glutamate--cysteine ligase (523 aa).

This sequence belongs to the glutamate--cysteine ligase type 1 family. Type 1 subfamily.

The catalysed reaction is L-cysteine + L-glutamate + ATP = gamma-L-glutamyl-L-cysteine + ADP + phosphate + H(+). The protein operates within sulfur metabolism; glutathione biosynthesis; glutathione from L-cysteine and L-glutamate: step 1/2. This chain is Glutamate--cysteine ligase, found in Shewanella oneidensis (strain ATCC 700550 / JCM 31522 / CIP 106686 / LMG 19005 / NCIMB 14063 / MR-1).